The chain runs to 33 residues: U1-pseudomyrmecitoxin-Pt1 subunit LS2 (33 aa).

This sequence belongs to the myrmexin family. As to quaternary structure, heterodimer composed of subunit LS2 and subunit SS1, heterodimer composed of subunit LS2 and SS2, and heterodimer composed of subunit LS2 and SS3; disulfide-linked. In terms of tissue distribution, expressed by the venom gland.

Its subcellular location is the secreted. In terms of biological role, this heterodimer may have anti-inflammatory properties, since the myrmexin complex (composed of 6 SS-LS heterodimers) inhibits carrageenin-induced edema in a dose-dependent manner (after subcutaneous injection into rats). The chain is U1-pseudomyrmecitoxin-Pt1 subunit LS2 from Pseudomyrmex triplarinus (Ant).